The following is a 316-amino-acid chain: GMP reductase (316 aa).

The active-site Thioimidate intermediate is Cys-175. 202–225 (VIADGGIVEHGDIAKALVCGATMV) is a binding site for NADP(+).

The protein belongs to the IMPDH/GMPR family. GuaC type 2 subfamily.

It catalyses the reaction IMP + NH4(+) + NADP(+) = GMP + NADPH + 2 H(+). Catalyzes the irreversible NADPH-dependent deamination of GMP to IMP. It functions in the conversion of nucleobase, nucleoside and nucleotide derivatives of G to A nucleotides, and in maintaining the intracellular balance of A and G nucleotides. The polypeptide is GMP reductase (Chromobacterium violaceum (strain ATCC 12472 / DSM 30191 / JCM 1249 / CCUG 213 / NBRC 12614 / NCIMB 9131 / NCTC 9757 / MK)).